Reading from the N-terminus, the 460-residue chain is Argininosuccinate lyase (460 aa).

The protein belongs to the lyase 1 family. Argininosuccinate lyase subfamily.

It localises to the cytoplasm. It carries out the reaction 2-(N(omega)-L-arginino)succinate = fumarate + L-arginine. It participates in amino-acid biosynthesis; L-arginine biosynthesis; L-arginine from L-ornithine and carbamoyl phosphate: step 3/3. This is Argininosuccinate lyase from Maridesulfovibrio salexigens (strain ATCC 14822 / DSM 2638 / NCIMB 8403 / VKM B-1763) (Desulfovibrio salexigens).